Here is a 118-residue protein sequence, read N- to C-terminus: Large ribosomal subunit protein uL24 (118 aa).

Belongs to the universal ribosomal protein uL24 family. As to quaternary structure, part of the 50S ribosomal subunit.

Its function is as follows. One of two assembly initiator proteins, it binds directly to the 5'-end of the 23S rRNA, where it nucleates assembly of the 50S subunit. One of the proteins that surrounds the polypeptide exit tunnel on the outside of the subunit. The polypeptide is Large ribosomal subunit protein uL24 (Prochlorococcus marinus (strain AS9601)).